A 140-amino-acid chain; its full sequence is MLMRTWIPLVILVVVIVGGFTVHRIRGFFGSENRPSYSDTNLENSKPFNPKHLTYEIFGPPGTVADISYFDVNSEPQRVDGAVLPWSLHITTNDAAVMGNIVAQGNSDSIGCRITVDGKVRAERVSNEVNAYTYCLVKSA.

The chain crosses the membrane as a helical span at residues 2–22; it reads LMRTWIPLVILVVVIVGGFTV.

It belongs to the MmpS family.

It is found in the cell membrane. The protein is Probable transport accessory protein MmpS4 (mmpS4) of Mycobacterium bovis (strain ATCC BAA-935 / AF2122/97).